A 687-amino-acid chain; its full sequence is Glycine--tRNA ligase beta subunit (687 aa).

It belongs to the class-II aminoacyl-tRNA synthetase family. As to quaternary structure, tetramer of two alpha and two beta subunits.

Its subcellular location is the cytoplasm. The enzyme catalyses tRNA(Gly) + glycine + ATP = glycyl-tRNA(Gly) + AMP + diphosphate. The polypeptide is Glycine--tRNA ligase beta subunit (Lactobacillus acidophilus (strain ATCC 700396 / NCK56 / N2 / NCFM)).